An 878-amino-acid chain; its full sequence is Alanine--tRNA ligase (878 aa).

Zn(2+)-binding residues include His568, His572, Cys670, and His674.

The protein belongs to the class-II aminoacyl-tRNA synthetase family. Zn(2+) serves as cofactor.

The protein resides in the cytoplasm. The enzyme catalyses tRNA(Ala) + L-alanine + ATP = L-alanyl-tRNA(Ala) + AMP + diphosphate. Catalyzes the attachment of alanine to tRNA(Ala) in a two-step reaction: alanine is first activated by ATP to form Ala-AMP and then transferred to the acceptor end of tRNA(Ala). Also edits incorrectly charged Ser-tRNA(Ala) and Gly-tRNA(Ala) via its editing domain. The sequence is that of Alanine--tRNA ligase from Latilactobacillus sakei subsp. sakei (strain 23K) (Lactobacillus sakei subsp. sakei).